Consider the following 95-residue polypeptide: Large ribosomal subunit protein uL23 (95 aa).

Belongs to the universal ribosomal protein uL23 family. As to quaternary structure, part of the 50S ribosomal subunit. Contacts protein L29, and trigger factor when it is bound to the ribosome.

One of the early assembly proteins it binds 23S rRNA. One of the proteins that surrounds the polypeptide exit tunnel on the outside of the ribosome. Forms the main docking site for trigger factor binding to the ribosome. The sequence is that of Large ribosomal subunit protein uL23 from Rubrobacter xylanophilus (strain DSM 9941 / JCM 11954 / NBRC 16129 / PRD-1).